The chain runs to 210 residues: 3-hexulose-6-phosphate synthase 1 (210 aa).

Belongs to the HPS/KGPDC family. HPS subfamily.

It catalyses the reaction D-ribulose 5-phosphate + formaldehyde = D-arabino-hex-3-ulose 6-phosphate. The protein operates within one-carbon metabolism; formaldehyde assimilation via RuMP pathway; D-fructose 6-phosphate from D-ribulose 5-phosphate and formaldehyde: step 1/2. Functionally, catalyzes the condensation of ribulose 5-phosphate with formaldehyde to form 3-hexulose 6-phosphate. The sequence is that of 3-hexulose-6-phosphate synthase 1 from Staphylococcus saprophyticus subsp. saprophyticus (strain ATCC 15305 / DSM 20229 / NCIMB 8711 / NCTC 7292 / S-41).